We begin with the raw amino-acid sequence, 943 residues long: Isoleucine--tRNA ligase (943 aa).

Residues 58 to 68 carry the 'HIGH' region motif; the sequence is PYANGSIHIGH. Residue Glu-567 participates in L-isoleucyl-5'-AMP binding. A 'KMSKS' region motif is present at residues 608-612; that stretch reads KMSKS. Residue Lys-611 participates in ATP binding. Cys-906, Cys-909, Cys-926, and Cys-929 together coordinate Zn(2+).

This sequence belongs to the class-I aminoacyl-tRNA synthetase family. IleS type 1 subfamily. As to quaternary structure, monomer. The cofactor is Zn(2+).

The protein resides in the cytoplasm. It carries out the reaction tRNA(Ile) + L-isoleucine + ATP = L-isoleucyl-tRNA(Ile) + AMP + diphosphate. Functionally, catalyzes the attachment of isoleucine to tRNA(Ile). As IleRS can inadvertently accommodate and process structurally similar amino acids such as valine, to avoid such errors it has two additional distinct tRNA(Ile)-dependent editing activities. One activity is designated as 'pretransfer' editing and involves the hydrolysis of activated Val-AMP. The other activity is designated 'posttransfer' editing and involves deacylation of mischarged Val-tRNA(Ile). The polypeptide is Isoleucine--tRNA ligase (Ectopseudomonas mendocina (strain ymp) (Pseudomonas mendocina)).